A 105-amino-acid polypeptide reads, in one-letter code: Nucleoid-associated protein SSP2277 (105 aa).

Residues 1-41 (MRGGGNMQQMMKQMQKMQKKMGEEQEKLKEEKVQGTAGGGM) form a disordered region. Residues 7-16 (MQQMMKQMQK) show a composition bias toward low complexity. The span at 20–33 (KMGEEQEKLKEEKV) shows a compositional bias: basic and acidic residues.

It belongs to the YbaB/EbfC family. Homodimer.

It localises to the cytoplasm. It is found in the nucleoid. Its function is as follows. Binds to DNA and alters its conformation. May be involved in regulation of gene expression, nucleoid organization and DNA protection. This chain is Nucleoid-associated protein SSP2277, found in Staphylococcus saprophyticus subsp. saprophyticus (strain ATCC 15305 / DSM 20229 / NCIMB 8711 / NCTC 7292 / S-41).